The primary structure comprises 379 residues: SUN domain-containing protein 5 (379 aa).

The tract at residues 1 to 45 is disordered; sequence MPRSSRSPGDPGALLEDVAHNPRPRRIAQRGRNTSRMAEDTSPNM. Residues 1–105 are Nuclear-facing; it reads MPRSSRSPGD…LLCQKLMEKT (105 aa). A compositionally biased stretch (polar residues) spans 31 to 45; that stretch reads GRNTSRMAEDTSPNM. A helical membrane pass occupies residues 106–122; that stretch reads GILLLCAFGFWMFSIHL. At 123–379 the chain is on the perinuclear space side; that stretch reads PSKMKVWQDD…PHQNPYPKRD (257 aa). Residues 141–182 adopt a coiled-coil conformation; it reads LRLYQEKVRHHSGEIQDLRGSMNQLIAKLQEMEAMSDEQKMA. The SUN domain occupies 205-364; it reads GASIDFEHTS…YRVRVHGSVA (160 aa).

Probable homotrimer. Interacts with DNAJB13. Highly glycosylated in the Golgi apparatus during spermiogenesis. As to expression, sperm (at protein level). Widely expressed. Conflictingly shown to be specifically expressed in testis.

It is found in the nucleus inner membrane. It localises to the golgi apparatus. Plays an essential role in anchoring sperm head to the tail. Is responsible for the attachment of the coupling apparatus to the sperm nuclear envelope. This chain is SUN domain-containing protein 5 (SUN5), found in Homo sapiens (Human).